Consider the following 298-residue polypeptide: Probable 2-(5''-triphosphoribosyl)-3'-dephosphocoenzyme-A synthase (298 aa).

It belongs to the CitG/MdcB family.

It carries out the reaction 3'-dephospho-CoA + ATP = 2'-(5''-triphospho-alpha-D-ribosyl)-3'-dephospho-CoA + adenine. The protein is Probable 2-(5''-triphosphoribosyl)-3'-dephosphocoenzyme-A synthase of Salmonella arizonae (strain ATCC BAA-731 / CDC346-86 / RSK2980).